The sequence spans 574 residues: Putative ABC transporter ATP-binding protein VV2_1533 (574 aa).

2 ABC transporter domains span residues 3-244 (IEFS…GIRE) and 299-533 (LDVR…ANLT). Residues 37–44 (GPSGSGKS) and 332–339 (GKNGSGKS) contribute to the ATP site.

This sequence belongs to the ABC transporter superfamily.

The protein resides in the cell inner membrane. Its function is as follows. Probably part of an ABC transporter complex. Responsible for energy coupling to the transport system. This is Putative ABC transporter ATP-binding protein VV2_1533 from Vibrio vulnificus (strain CMCP6).